The chain runs to 443 residues: Tubulin beta chain (443 aa).

Residues Q11, E69, S138, G142, T143, G144, N204, and N226 each coordinate GTP. A Mg(2+)-binding site is contributed by E69.

Belongs to the tubulin family. Dimer of alpha and beta chains. A typical microtubule is a hollow water-filled tube with an outer diameter of 25 nm and an inner diameter of 15 nM. Alpha-beta heterodimers associate head-to-tail to form protofilaments running lengthwise along the microtubule wall with the beta-tubulin subunit facing the microtubule plus end conferring a structural polarity. Microtubules usually have 13 protofilaments but different protofilament numbers can be found in some organisms and specialized cells. It depends on Mg(2+) as a cofactor.

The protein resides in the cytoplasm. It localises to the cytoskeleton. Tubulin is the major constituent of microtubules, a cylinder consisting of laterally associated linear protofilaments composed of alpha- and beta-tubulin heterodimers. Microtubules grow by the addition of GTP-tubulin dimers to the microtubule end, where a stabilizing cap forms. Below the cap, tubulin dimers are in GDP-bound state, owing to GTPase activity of alpha-tubulin. The polypeptide is Tubulin beta chain (Thalassiosira weissflogii (Marine diatom)).